The chain runs to 321 residues: Ribose-phosphate pyrophosphokinase (321 aa).

Residues 44–46 (DGE) and 103–104 (RQ) contribute to the ATP site. Positions 137 and 179 each coordinate Mg(2+). Lysine 202 is a catalytic residue. D-ribose 5-phosphate-binding positions include arginine 204, aspartate 228, and 232–236 (DTAGT).

The protein belongs to the ribose-phosphate pyrophosphokinase family. Class I subfamily. As to quaternary structure, homohexamer. Requires Mg(2+) as cofactor.

It localises to the cytoplasm. It carries out the reaction D-ribose 5-phosphate + ATP = 5-phospho-alpha-D-ribose 1-diphosphate + AMP + H(+). It functions in the pathway metabolic intermediate biosynthesis; 5-phospho-alpha-D-ribose 1-diphosphate biosynthesis; 5-phospho-alpha-D-ribose 1-diphosphate from D-ribose 5-phosphate (route I): step 1/1. Functionally, involved in the biosynthesis of the central metabolite phospho-alpha-D-ribosyl-1-pyrophosphate (PRPP) via the transfer of pyrophosphoryl group from ATP to 1-hydroxyl of ribose-5-phosphate (Rib-5-P). The protein is Ribose-phosphate pyrophosphokinase of Staphylococcus aureus (strain COL).